The following is an 803-amino-acid chain: Exocyst complex component 6 (803 aa).

The protein belongs to the SEC15 family. In terms of assembly, the exocyst complex is composed of EXOC1, EXOC2, EXOC3, EXOC4, EXOC5, EXOC6, EXOC7 and EXOC8. Interacts with CNTRL. Interacts with RAB11A in a GTP-dependent manner.

It localises to the cytoplasm. It is found in the perinuclear region. Its subcellular location is the cell projection. The protein localises to the growth cone. The protein resides in the midbody. It localises to the midbody ring. Its function is as follows. Component of the exocyst complex involved in the docking of exocytic vesicles with fusion sites on the plasma membrane. Together with RAB11A, RAB3IP, RAB8A, PARD3, PRKCI, ANXA2, CDC42 and DNMBP promotes transcytosis of PODXL to the apical membrane initiation sites (AMIS), apical surface formation and lumenogenesis. In Canis lupus familiaris (Dog), this protein is Exocyst complex component 6 (EXOC6).